Here is a 402-residue protein sequence, read N- to C-terminus: Multidrug resistance protein MdtG (402 aa).

11 helical membrane-spanning segments follow: residues 14-34, 52-72, 90-110, 113-133, 149-169, 171-191, 219-239, 254-274, 288-308, 318-338, and 376-396; these read LYIV…IMPF, LWTG…APFW, LGMA…QLLI, ALLG…ATQV, AVSG…LYGL, PVFF…LFFV, VICL…VTPI, LAFI…ISAP, VLIF…LVSN, LLGA…LYNI, and AVFY…WISF.

It belongs to the major facilitator superfamily. DHA1 family. MdtG (TC 2.A.1.2.20) subfamily.

The protein resides in the cell inner membrane. This is Multidrug resistance protein MdtG from Proteus mirabilis (strain HI4320).